A 198-amino-acid chain; its full sequence is UPF0098 protein PH1269 (198 aa).

Belongs to the UPF0098 family.

This is UPF0098 protein PH1269 from Pyrococcus horikoshii (strain ATCC 700860 / DSM 12428 / JCM 9974 / NBRC 100139 / OT-3).